The chain runs to 341 residues: UDP-3-O-acylglucosamine N-acyltransferase (341 aa).

Histidine 239 functions as the Proton acceptor in the catalytic mechanism.

Belongs to the transferase hexapeptide repeat family. LpxD subfamily. Homotrimer.

The enzyme catalyses a UDP-3-O-[(3R)-3-hydroxyacyl]-alpha-D-glucosamine + a (3R)-hydroxyacyl-[ACP] = a UDP-2-N,3-O-bis[(3R)-3-hydroxyacyl]-alpha-D-glucosamine + holo-[ACP] + H(+). The protein operates within bacterial outer membrane biogenesis; LPS lipid A biosynthesis. In terms of biological role, catalyzes the N-acylation of UDP-3-O-acylglucosamine using 3-hydroxyacyl-ACP as the acyl donor. Is involved in the biosynthesis of lipid A, a phosphorylated glycolipid that anchors the lipopolysaccharide to the outer membrane of the cell. This is UDP-3-O-acylglucosamine N-acyltransferase from Shewanella sp. (strain MR-4).